A 635-amino-acid chain; its full sequence is Extracellular metalloproteinase 1 (635 aa).

An N-terminal signal peptide occupies residues 1–19 (MHGLLLAAGLLSLPLHVLA). The propeptide occupies 20-246 (HPQPSTSTSL…VHNVVDYVAH (227 aa)). N287 is a glycosylation site (N-linked (GlcNAc...) asparagine). H430 contributes to the Zn(2+) binding site. E431 is an active-site residue. H434 provides a ligand contact to Zn(2+). N-linked (GlcNAc...) asparagine glycans are attached at residues N475, N594, and N623.

This sequence belongs to the peptidase M36 family. Zn(2+) is required as a cofactor.

Its subcellular location is the secreted. Functionally, secreted metalloproteinase probably acting as a virulence factor. The protein is Extracellular metalloproteinase 1 (MEP1) of Trichophyton tonsurans (Scalp ringworm fungus).